A 303-amino-acid chain; its full sequence is Putative S-adenosyl-L-methionine-dependent methyltransferase MSMEG_1479/MSMEI_1443 (303 aa).

S-adenosyl-L-methionine contacts are provided by residues aspartate 130 and aspartate 159 to leucine 160.

It belongs to the UPF0677 family.

Functionally, exhibits S-adenosyl-L-methionine-dependent methyltransferase activity. This Mycolicibacterium smegmatis (strain ATCC 700084 / mc(2)155) (Mycobacterium smegmatis) protein is Putative S-adenosyl-L-methionine-dependent methyltransferase MSMEG_1479/MSMEI_1443.